We begin with the raw amino-acid sequence, 507 residues long: Probable cyclic di-GMP phosphodiesterase PdeG (507 aa).

The next 2 membrane-spanning stretches (helical) occupy residues 4-24 and 217-237; these read TLIP…ILNI and LIDK…AAAF. Residues 246–500 form the EAL domain; it reads SATPEEILRR…DLVKIILSKP (255 aa).

The protein localises to the cell membrane. The enzyme catalyses 3',3'-c-di-GMP + H2O = 5'-phosphoguanylyl(3'-&gt;5')guanosine + H(+). In terms of biological role, phosphodiesterase (PDE) that catalyzes the hydrolysis of cyclic-di-GMP (c-di-GMP) to 5'-pGpG. The chain is Probable cyclic di-GMP phosphodiesterase PdeG from Escherichia coli (strain K12).